The chain runs to 400 residues: Tyrosine-specific transport system 1 (400 aa).

A run of 12 helical transmembrane segments spans residues 5–25 (VGSTLLVAGTMIGAGMLAMPL), 34–54 (FTLVLLLGLWALLTFSALLFV), 80–100 (IIATAVLIIFLYALIAAYISG), 117–137 (VSVLLFTVIFGSFIVIGTHSV), 143–163 (VLFFVMLAAFAVVLSLMLPEI), 176–196 (ALIISASPVFFTAFGFHGSIP), 211–231 (FSILVGSAITLCAYILWQLST), 250–270 (LNGLVKATFAITGSNVIASAV), 273–293 (FSTLALITSFLGVGLGLLECI), 313–333 (LTFIPPLVFALFYPEGFILAL), 335–355 (YAGQMFAFYAVVLPVSLVWKA), and 370–390 (NLTLIIVLVLGVLITSIPFAI).

It belongs to the amino acid/polyamine transporter 2 family. Mtr/TnaB/TyrP permease subfamily.

Its subcellular location is the cell inner membrane. It catalyses the reaction L-tyrosine(in) + H(+)(in) = L-tyrosine(out) + H(+)(out). In terms of biological role, transports tyrosine across the cytoplasmic membrane. The transport system is energized by the proton motive force. This is Tyrosine-specific transport system 1 (tyrP-A) from Haemophilus influenzae (strain ATCC 51907 / DSM 11121 / KW20 / Rd).